Here is a 130-residue protein sequence, read N- to C-terminus: DNA-directed RNA polymerase subunit omega (130 aa).

2 disordered regions span residues 79–98 (EPES…VDAD) and 108–130 (TEEE…EEDE).

It belongs to the RNA polymerase subunit omega family. The RNAP catalytic core consists of 2 alpha, 1 beta, 1 beta' and 1 omega subunit. When a sigma factor is associated with the core the holoenzyme is formed, which can initiate transcription.

It catalyses the reaction RNA(n) + a ribonucleoside 5'-triphosphate = RNA(n+1) + diphosphate. Its function is as follows. Promotes RNA polymerase assembly. Latches the N- and C-terminal regions of the beta' subunit thereby facilitating its interaction with the beta and alpha subunits. The sequence is that of DNA-directed RNA polymerase subunit omega from Nitrobacter winogradskyi (strain ATCC 25391 / DSM 10237 / CIP 104748 / NCIMB 11846 / Nb-255).